The primary structure comprises 515 residues: MFSTLSPSAIDDILRHAVHFGQGTTAIAPSPVTFISTTTQQSLGATYPGVFNPTTPTFNHYQHQALPVTMHTSTSSAHHTTTGHGRGRRKNSTINLVCVVCGDQAFGKHYGVNACNGCKGFFRRSVWHNRQYLCRFEGRCAIAKEHRNVCRACRLKQCFVAGMNPRAVQSERVEREQNGSPNQIEEDDYKDLSSPDTCSVEIQTDVDEQKPSSNNSAPLPSMELEMAKLSEQIVEMHRAVCSYVDPVTKRENFDMKMETETTKIAFMNAFYNPEMIGPRTPLDITGRRVATVKDVMDEWKRNFVLFSDWLRALPEYNQMSIEDQIVLAKNRYGTFHWWMCANWTVQAGCEGVCYSNGAYFPKQPEAQCIPDVKGSSGRMYDSLSIPIKELNLDETEIVLMLAVIIFSDEITELADLTPAGKEHVRMVGNRFVRMLHHHVNSKEYGEAMENGDDTQNSSESQAAVRIAKMMILLSATTNLVYLTSDNIQLMEVLHVVPSEYLCHEVQFIQNSYETP.

Residues 95–170 (NLVCVVCGDQ…AGMNPRAVQS (76 aa)) constitute a DNA-binding region (nuclear receptor). 2 NR C4-type zinc fingers span residues 98-118 (CVVC…CNGC) and 134-153 (CRFE…CRAC). Positions 169 to 195 (QSERVEREQNGSPNQIEEDDYKDLSSP) are disordered. Residues 225-509 (EMAKLSEQIV…YLCHEVQFIQ (285 aa)) enclose the NR LBD domain. Positions 498–509 (SEYLCHEVQFIQ) are AF-2.

Belongs to the nuclear hormone receptor family. Widely expressed at a low level in many tissues including the pharynx, sensory neurons, intestine, spermatheca, hypodermis, and excretory cell.

The protein resides in the nucleus. Orphan nuclear hormone receptor. Required for metabolic and physiologic responses associated with dietary-restriction-induced longevity. Modulates triglyceride and lipid metabolism and autophagy, associated with dietary-restriction, probably acting via regulation of transcription of target genes. In Caenorhabditis elegans, this protein is Nuclear hormone receptor family member nhr-62 (nhr-62).